The following is a 338-amino-acid chain: D-xylulose reductase (338 aa).

Residues Cys40, His65, and Glu151 each coordinate Zn(2+).

It belongs to the zinc-containing alcohol dehydrogenase family. As to quaternary structure, homotetramer. The cofactor is Zn(2+).

It catalyses the reaction xylitol + NAD(+) = D-xylulose + NADH + H(+). The sequence is that of D-xylulose reductase from Morganella morganii (Proteus morganii).